A 378-amino-acid polypeptide reads, in one-letter code: Ferredoxin--NADP reductase, root isozyme, chloroplastic (378 aa).

The span at 1-17 (MATAVASQVAVSAPAGS) shows a compositional bias: low complexity. Positions 1–27 (MATAVASQVAVSAPAGSDRGLRSSGIQ) are disordered. Residues 1-62 (MATAVASQVA…PRHANKVLCM (62 aa)) constitute a chloroplast transit peptide. The FAD-binding FR-type domain occupies 93-221 (KEPYTATIVS…TGPSGKIMLL (129 aa)). FAD contacts are provided by residues 153–156 (RLYS), 174–176 (CVR), Tyr-180, 195–197 (VCS), and Thr-237. Positions 156 and 176 each coordinate NADP(+). NADP(+) contacts are provided by residues Thr-237, 269-270 (VA), 299-300 (SR), Lys-309, 337-338 (GL), and Glu-376.

The protein belongs to the ferredoxin--NADP reductase type 1 family. FAD is required as a cofactor.

Its subcellular location is the plastid. The protein localises to the chloroplast. The catalysed reaction is 2 reduced [2Fe-2S]-[ferredoxin] + NADP(+) + H(+) = 2 oxidized [2Fe-2S]-[ferredoxin] + NADPH. Its pathway is energy metabolism; photosynthesis. Functionally, may play a key role in regulating the relative amounts of cyclic and non-cyclic electron flow to meet the demands of the plant for ATP and reducing power. Is involved in nitrate assimilation. This is Ferredoxin--NADP reductase, root isozyme, chloroplastic from Oryza sativa subsp. japonica (Rice).